The chain runs to 265 residues: Acrosomal protein SP-10 (265 aa).

An N-terminal signal peptide occupies residues 1 to 21 (MNRFLLLMSLYLLGSARGTSS). Residues 62-181 (LNTLSEHGSS…EQASGAPISS (120 aa)) are disordered. Repeat copies occupy residues 66-70 (SEHGS), 71-75 (SEHGS), 85-88 (SGEH), 91-95 (SEHAS), 110-114 (VGEQP), 115-119 (SGEQP), 120-123 (SGEH), 125-129 (SGEQP), 135-139 (SGEQP), 140-144 (SDEQP), 145-148 (SGEH), 150-154 (SGEQP), 155-159 (SGEQA), 160-164 (SGEQP), 165-168 (SGEH), and 170-174 (SGEQA). Residues 66-95 (SEHGSSEHGSSKHTVAEHTSGEHAESEHAS) are 3 X 5 AA repeats of S-E-H-[GA]-S. Residues 69–110 (GSSEHGSSKHTVAEHTSGEHAESEHASGEPAATEHAEGEHTV) show a composition bias toward basic and acidic residues. Positions 85 to 168 (SGEHAESEHA…ASGEQPSGEH (84 aa)) are 4 X 4 AA repeats of S-G-E-H. The tract at residues 110–174 (VGEQPSGEQP…SGEHASGEQA (65 aa)) is 9 X 5 AA repeats of [SV]-G-E-Q-[PSA]. Polar residues predominate over residues 152 to 163 (EQPSGEQASGEQ). The N-linked (GlcNAc...) asparagine glycan is linked to N258.

Testis.

The protein resides in the cytoplasmic vesicle. It is found in the secretory vesicle. Its subcellular location is the acrosome. This Homo sapiens (Human) protein is Acrosomal protein SP-10 (ACRV1).